The sequence spans 238 residues: Probable transcriptional regulatory protein CTA_0499 (238 aa).

Positions 1–21 (MAGHSKWANTKHRKERADHKK) are disordered. Basic residues predominate over residues 9-21 (NTKHRKERADHKK).

It belongs to the TACO1 family.

It is found in the cytoplasm. This chain is Probable transcriptional regulatory protein CTA_0499, found in Chlamydia trachomatis serovar A (strain ATCC VR-571B / DSM 19440 / HAR-13).